Consider the following 179-residue polypeptide: Phospholipase A2 (179 aa).

Positions 1-21 are cleaved as a signal peptide; that stretch reads MHALRSSVLALWLCLHVSVRA. Residues 22–39 constitute a propeptide that is removed on maturation; it reads WMTYRSANGLDEYEPEDR. Residues Trp47, Gly49, and Gly51 each coordinate Ca(2+). Intrachain disulfides connect Cys48-Cys70, Cys69-Cys109, Cys76-Cys102, Cys100-Cys133, and Cys142-Cys150. Residue His73 is part of the active site. Asp74 provides a ligand contact to Ca(2+). Asp103 is an active-site residue.

Belongs to the phospholipase A2 family. Group III subfamily. The cofactor is Ca(2+). Expressed by the venom gland.

It localises to the secreted. The catalysed reaction is a 1,2-diacyl-sn-glycero-3-phosphocholine + H2O = a 1-acyl-sn-glycero-3-phosphocholine + a fatty acid + H(+). In terms of biological role, may potentiate Xylotoxin(1)-Xa1a DRG activation and cell lysis, since the orthologous A.mellifera PA2 potentiates Xylotoxin(1)-Xa1a DRG activation and cell lysis. In vivo, intraplantar injection in mice may potentiate spontaneous pain behaviors and paw swelling caused by Xylotoxin(1)-Xa1a, since the orthologous A.mellifera PA2 shows this effect. PLA2 catalyzes the calcium-dependent hydrolysis of the 2-acyl groups in 3-sn-phosphoglycerides. In Xylocopa aruana (Great carpenter bee), this protein is Phospholipase A2.